The sequence spans 837 residues: Tuftelin-interacting protein 11 (837 aa).

Over residues 1–13 (MSLSHLYRDGEGH) the composition is skewed to basic and acidic residues. Disordered regions lie at residues 1-31 (MSLS…DWDL), 54-73 (WAER…RARD), and 85-136 (LKKG…AGGT). The interval 1-50 (MSLSHLYRDGEGHMDDDEDERENFEITDWDLQNEFNPNRQRHWQTKEEAT) is required for interaction with DHX15. At S2 the chain carries Phosphoserine. A compositionally biased stretch (acidic residues) spans 14 to 28 (MDDDEDERENFEITD). Positions 54–64 (WAERDSDEERP) are enriched in basic and acidic residues. Phosphoserine occurs at positions 59 and 98. Over residues 91 to 102 (EEAELEDSDDEE) the composition is skewed to acidic residues. Positions 103–116 (KPVKQDEFPKDFGP) are enriched in basic and acidic residues. S144 is modified (phosphoserine). The 47-residue stretch at 149 to 195 (TKGIGQKLLQKMGYVPGRGLGKNAQGIINPIEAKQRKGKGAVGAYGS) folds into the G-patch domain. Disordered stretches follow at residues 183–236 (QRKG…KKKP) and 287–313 (HKHS…ARAP). S210 bears the Phosphoserine mark. Positions 217-231 (EFQKELSQWRKDPSG) are enriched in basic and acidic residues. The Nuclear localization signal motif lies at 700–705 (VKDKFN). The interval 710–734 (IMNRAVSSNVGAYMQPGAREHIAYL) is required for nuclear speckle localization.

Belongs to the TFP11/STIP family. Identified in the spliceosome C complex. Found in the Intron Large (IL) complex, a post-mRNA release spliceosomal complex containing the excised intron, U2, U5 and U6 snRNPs, and splicing factors. Interacts with TUFT1. Interacts with DHX15; indicative for a recruitment of DHX15 to the IL complex. Interacts with GCFC2.

It is found in the cytoplasm. The protein localises to the nucleus. Its function is as follows. Involved in pre-mRNA splicing, specifically in spliceosome disassembly during late-stage splicing events. Intron turnover seems to proceed through reactions in two lariat-intron associated complexes termed Intron Large (IL) and Intron Small (IS). In cooperation with DHX15 seems to mediate the transition of the U2, U5 and U6 snRNP-containing IL complex to the snRNP-free IS complex leading to efficient debranching and turnover of excised introns. May play a role in the differentiation of ameloblasts and odontoblasts or in the forming of the enamel extracellular matrix. The protein is Tuftelin-interacting protein 11 (TFIP11) of Bos taurus (Bovine).